The following is a 114-amino-acid chain: T cell receptor beta variable 4-3 (114 aa).

The signal sequence occupies residues 1 to 21 (MGCRLLCCAVLCLLGAVPMET). The Ig-like domain maps to 22–114 (GVTQTPRHLV…SALYLCASSQ (93 aa)). Cys-42 and Cys-110 form a disulfide bridge. N-linked (GlcNAc...) asparagine glycans are attached at residues Asn-76 and Asn-89.

As to quaternary structure, alpha-beta TR is a heterodimer composed of an alpha and beta chain; disulfide-linked. The alpha-beta TR is associated with the transmembrane signaling CD3 coreceptor proteins to form the TR-CD3 (TcR or TCR). The assembly of alpha-beta TR heterodimers with CD3 occurs in the endoplasmic reticulum where a single alpha-beta TR heterodimer associates with one CD3D-CD3E heterodimer, one CD3G-CD3E heterodimer and one CD247 homodimer forming a stable octameric structure. CD3D-CD3E and CD3G-CD3E heterodimers preferentially associate with TR alpha and TR beta chains, respectively. The association of the CD247 homodimer is the last step of TcR assembly in the endoplasmic reticulum and is required for transport to the cell surface.

The protein localises to the cell membrane. Its function is as follows. V region of the variable domain of T cell receptor (TR) beta chain that participates in the antigen recognition. Alpha-beta T cell receptors are antigen specific receptors which are essential to the immune response and are present on the cell surface of T lymphocytes. Recognize peptide-major histocompatibility (MH) (pMH) complexes that are displayed by antigen presenting cells (APC), a prerequisite for efficient T cell adaptive immunity against pathogens. Binding of alpha-beta TR to pMH complex initiates TR-CD3 clustering on the cell surface and intracellular activation of LCK that phosphorylates the ITAM motifs of CD3G, CD3D, CD3E and CD247 enabling the recruitment of ZAP70. In turn ZAP70 phosphorylates LAT, which recruits numerous signaling molecules to form the LAT signalosome. The LAT signalosome propagates signal branching to three major signaling pathways, the calcium, the mitogen-activated protein kinase (MAPK) kinase and the nuclear factor NF-kappa-B (NF-kB) pathways, leading to the mobilization of transcription factors that are critical for gene expression and essential for T cell growth and differentiation. The T cell repertoire is generated in the thymus, by V-(D)-J rearrangement. This repertoire is then shaped by intrathymic selection events to generate a peripheral T cell pool of self-MH restricted, non-autoaggressive T cells. Post-thymic interaction of alpha-beta TR with the pMH complexes shapes TR structural and functional avidity. The protein is T cell receptor beta variable 4-3 of Homo sapiens (Human).